We begin with the raw amino-acid sequence, 349 residues long: Anthranilate phosphoribosyltransferase (349 aa).

5-phospho-alpha-D-ribose 1-diphosphate is bound by residues glycine 82, glycine 85 to aspartate 86, asparagine 92 to threonine 95, lysine 110 to glycine 118, and serine 122. Glycine 82 is an anthranilate binding site. Serine 94 contacts Mg(2+). Asparagine 113 is an anthranilate binding site. An anthranilate-binding site is contributed by arginine 168. Mg(2+) is bound by residues aspartate 227 and glutamate 228.

Belongs to the anthranilate phosphoribosyltransferase family. As to quaternary structure, homodimer. Mg(2+) serves as cofactor.

The catalysed reaction is N-(5-phospho-beta-D-ribosyl)anthranilate + diphosphate = 5-phospho-alpha-D-ribose 1-diphosphate + anthranilate. It functions in the pathway amino-acid biosynthesis; L-tryptophan biosynthesis; L-tryptophan from chorismate: step 2/5. Functionally, catalyzes the transfer of the phosphoribosyl group of 5-phosphorylribose-1-pyrophosphate (PRPP) to anthranilate to yield N-(5'-phosphoribosyl)-anthranilate (PRA). The polypeptide is Anthranilate phosphoribosyltransferase (Pseudomonas savastanoi pv. phaseolicola (strain 1448A / Race 6) (Pseudomonas syringae pv. phaseolicola (strain 1448A / Race 6))).